The chain runs to 706 residues: Mitochondrial intermediate peptidase, mitochondrial (706 aa).

A mitochondrion-targeting transit peptide spans 1-29; the sequence is MWKLTRRLQPHINSTRWLVRNFRNGGAGD. A disordered region spans residues 212 to 238; it reads NPTYRSTSGGSRGSTRSAHKSKQKGFR. Residues 214-227 show a composition bias toward low complexity; sequence TYRSTSGGSRGSTR. His491 is a binding site for Zn(2+). The active site involves Glu492. Residues His495 and Glu520 each contribute to the Zn(2+) site.

The protein belongs to the peptidase M3 family. Requires Zn(2+) as cofactor.

Its subcellular location is the mitochondrion. Functionally, aminopeptidase which cleaves preproteins, imported into the mitochondrion, to their mature size. Could cleave both preproteins and preprotein intermediates already cleaved by the mitochondrial processing peptidase (MPP). This Arabidopsis thaliana (Mouse-ear cress) protein is Mitochondrial intermediate peptidase, mitochondrial.